Here is a 363-residue protein sequence, read N- to C-terminus: Ribosomal RNA large subunit methyltransferase M (363 aa).

S-adenosyl-L-methionine-binding positions include Ser190, 223-226 (CPGG), Asp242, Asp262, and Asp279. Lys308 acts as the Proton acceptor in catalysis.

It belongs to the class I-like SAM-binding methyltransferase superfamily. RNA methyltransferase RlmE family. RlmM subfamily. In terms of assembly, monomer.

Its subcellular location is the cytoplasm. The catalysed reaction is cytidine(2498) in 23S rRNA + S-adenosyl-L-methionine = 2'-O-methylcytidine(2498) in 23S rRNA + S-adenosyl-L-homocysteine + H(+). In terms of biological role, catalyzes the 2'-O-methylation at nucleotide C2498 in 23S rRNA. In Vibrio atlanticus (strain LGP32) (Vibrio splendidus (strain Mel32)), this protein is Ribosomal RNA large subunit methyltransferase M.